A 295-amino-acid polypeptide reads, in one-letter code: MWGARRSSVSSSWNAASLLQLLLAALLAAGARASGEYCHGWLDAQGVWRIGFQCPERFDGGDATICCGSCALRYCCSSAEARLDQGGCDNDRQQGAGEPGRADKDGPDGSAVPIYVPFLIVGSVFVAFIILGSLVAACCCRCLRPKQDPQQSRAPGGNRLMETIPMIPSASTSRGSSSRQSSTAASSSSSANSGARAPPTRSQTNCCLPEGTMNNVYVNMPTNFSVLNCQQATQIVPHQGQYLHPPYVGYTVQHDSVPMTAVPPFMDGLQPGYRQIQSPFPHTNSEQKMYPAVTV.

The first 33 residues, 1 to 33 (MWGARRSSVSSSWNAASLLQLLLAALLAAGARA), serve as a signal peptide directing secretion. The Extracellular portion of the chain corresponds to 34–110 (SGEYCHGWLD…RADKDGPDGS (77 aa)). The segment at 87–108 (GCDNDRQQGAGEPGRADKDGPD) is disordered. The chain crosses the membrane as a helical span at residues 111 to 131 (AVPIYVPFLIVGSVFVAFIIL). Residues 132–295 (GSLVAACCCR…EQKMYPAVTV (164 aa)) lie on the Cytoplasmic side of the membrane. A disordered region spans residues 168–205 (PSASTSRGSSSRQSSTAASSSSSANSGARAPPTRSQTN). The segment covering 169–197 (SASTSRGSSSRQSSTAASSSSSANSGARA) has biased composition (low complexity).

This sequence belongs to the shisa family.

Its subcellular location is the endoplasmic reticulum membrane. Its function is as follows. Plays an essential role in the maturation of presomitic mesoderm cells by individual attenuation of both FGF and WNT signaling. This chain is Protein shisa-2 homolog (SHISA2), found in Homo sapiens (Human).